The chain runs to 181 residues: BURP domain-containing protein 7 (181 aa).

A signal peptide spans 1 to 21; sequence MARSLAALLLLLVAAAGDSHA. The region spanning 65–181 is the BURP domain; it reads FFLEKDLFPG…RRGRRTGWRP (117 aa). Residues 112 to 181 are disordered; sequence QLSVPAGSPA…RRGRRTGWRP (70 aa). Residues 128-143 are compositionally biased toward basic residues; sequence RPRRSPARRSNARRRS. The span at 144 to 157 shows a compositional bias: low complexity; the sequence is SPWWSSPRPASAPA. Positions 170–181 are enriched in basic residues; sequence GRRRGRRTGWRP.

As to expression, expressed in roots, stems, leaves and shoot.

This chain is BURP domain-containing protein 7 (BURP7), found in Oryza sativa subsp. japonica (Rice).